Reading from the N-terminus, the 289-residue chain is 5'-adenylylsulfate reductase-like 7 (289 aa).

Residues 1 to 23 (MNLWVSIFLVSAIAGSCLPSGFA) form the signal peptide. A Thioredoxin domain is found at 37 to 157 (SVIEQKCPRS…LIQFYKETTG (121 aa)). Asn132 and Asn184 each carry an N-linked (GlcNAc...) asparagine glycan. The chain crosses the membrane as a helical span at residues 198–218 (MVLALMFLSLKLAILIFPIMG).

The protein resides in the membrane. The protein is 5'-adenylylsulfate reductase-like 7 (APRL7) of Arabidopsis thaliana (Mouse-ear cress).